A 140-amino-acid polypeptide reads, in one-letter code: Pro-variola growth factor (140 aa).

Positions 1–18 (MSMKYLMLLFAAMIIRSF) are cleaved as a signal peptide. Over 19 to 100 (ANSGNAIETT…SEKPNTTTSY (82 aa)) the chain is Extracellular. The N-linked (GlcNAc...) asparagine; by host glycan is linked to Asn34. The EGF-like domain occupies 41–81 (AIRLCGPEGDRYCFHGICIHARDIDGMYCRCSHGYTGIRCQ). Intrachain disulfides connect Cys45–Cys58, Cys53–Cys69, and Cys71–Cys80. N-linked (GlcNAc...) asparagine; by host glycosylation occurs at Asn95. The chain crosses the membrane as a helical span at residues 101-121 (IPSPGIVLVLLVSIIVCCLLF). At 122-140 (VYRFTRRTNKLPLQDMVVP) the chain is on the cytoplasmic side.

The protein belongs to the orthopoxvirus OPG019 family. Variola growth factor interacts with host EGFR and promotes EGFR dimerization.

The protein resides in the host membrane. It is found in the secreted. Functionally, stimulates cellular proliferation (hyperplasia)and mobility around infected cells to promote rapid and efficient spread of infection. This effect is beneficial for virus replication in vivo, because poxviruses replicate possibly better in proliferating cells than in quiescent cells. Acts by binding host EGFR, inducing its dimerization, autophosphorylation and leading to activation of several cellular pathways regulating cell proliferation or cell survival. The activation by host EGFR of mitogen activated protein kinases (MAPK) and extracellular-signal regulated kinases (ERK) are essential for the positive effect of vaccinia growth factor on poxvirus virulence in vivo. The chain is Pro-variola growth factor (OPG019) from Variola virus (isolate Human/India/Ind3/1967) (VARV).